Consider the following 134-residue polypeptide: Protein YhfA (134 aa).

The polypeptide is Protein YhfA (yhfA) (Escherichia coli O157:H7).